An 835-amino-acid polypeptide reads, in one-letter code: Axin-1 (835 aa).

The disordered stretch occupies residues 16 to 60; that stretch reads LGSSFTEDAPRPPVPGEEGDLVSSDGRQYNHSFYSSKSDSLKNEA. The span at 40 to 53 shows a compositional bias: polar residues; it reads DGRQYNHSFYSSKS. The region spanning 92–214 is the RGS domain; sequence SLHSLLDDQD…LKSDIYLEYT (123 aa). The tract at residues 318–349 is disordered; it reads ATSANDSEQQSMSSDADTLSLTDSSVDGVPPY. Residues 328-344 are compositionally biased toward low complexity; that stretch reads SMSSDADTLSLTDSSVD. Residues 351-436 are interaction with GSK3B; that stretch reads YRKPHRREIH…DADISTGPSL (86 aa). Residues 437–512 are interaction with beta-catenin; the sequence is ANHRVPPAVH…SPDGLPAGKI (76 aa). 2 disordered regions span residues 485–530 and 602–627; these read KTPG…QARQ and GYSS…FEMR. Residues 616–627 show a composition bias toward basic and acidic residues; it reads RKGEDGRNFEMR. One can recognise a DIX domain in the interval 753–835; sequence CENITVAYYF…KIIGKVEKVD (83 aa).

In terms of assembly, homodimer. Interacts with dixdc1. Interacts with hwa; leading to promote the tankyrase-mediated degradation of axin1. In terms of processing, ADP-ribosylated by tankyrase tnks and tnks2. Poly-ADP-ribosylated protein is recognized by rnf146, followed by ubiquitination at 'Lys-48' and subsequent activation of the Wnt signaling pathway. Ubiquitinated by rnf146 when poly-ADP-ribosylated, leading to its degradation and subsequent activation of the Wnt signaling pathway.

It is found in the cytoplasm. Its subcellular location is the nucleus. The protein resides in the membrane. It localises to the cell membrane. Component of the beta-catenin destruction complex required for regulating ctnnb1 levels through phosphorylation and ubiquitination, and modulating Wnt-signaling. Controls dorsoventral patterning via two opposing effects: down-regulates ctnnb1 to inhibit the Wnt signaling pathway and ventralize embryos, but also dorsalizes embryos by activating a Wnt-independent JNK signaling pathway. The polypeptide is Axin-1 (axin1) (Danio rerio (Zebrafish)).